We begin with the raw amino-acid sequence, 506 residues long: MGINDNGIYGSLKGNSTTGGIYKMGDHNTGYGEKNNQNNNNKSGGKTIVNGVIVNSNQQKLKGDENEFDHSQDDNADEFNKFPKKVKYNDLLYSVLFAIQMVLFITMTVIAGTKHPNKKEFVEYSLQGLLIIAISIPLILAFFLIWKKIFKIHPTNMIKTSFFSLMITGILFIGLLIGNGWYSWAIVFGITLISLIFFYFAFRDKIPFVGIIISLVLKIIEKYPSTLLVSFVCLIISCVYYNIWLFSVSYNFYYDSYWTAWSYMKFMFLVFNLYWTHYVITYTCYSVVSGLVASWYFFADEDFNGMPPKPCAHSLYRSMTSSFGSIAFGSLLVCLVQMVQFICRGFARVPGLTSLFCNCLQFIALIFTRMLYTFNIYTFSMVSIYGQSFCNSSKKTYNLMVNNNEKLFATHNYMLITMLSVSLSMFLIIGFIVTMIMATIQLENQGWLYVQLVMFLFILYKPFDIIFSSVLTILMCLISDPNAMEVTKPNTFILLSETYDFKSLNP.

N-linked (GlcNAc...) asparagine glycans are attached at residues N15 and N41. Transmembrane regions (helical) follow at residues 91–111 (LLYS…TVIA), 126–146 (LQGL…FLIW), 161–181 (SFFS…GNGW), 182–202 (YSWA…YFAF), 226–246 (TLLV…IWLF), 256–276 (SYWT…LYWT), 279–299 (VITY…YFFA), 323–343 (FGSI…QFIC), 345–367 (GFAR…ALIF), 371–393 (LYTF…CNSS), 416–436 (ITML…VTMI), and 447–467 (WLYV…DIIF).

The protein belongs to the CTL (choline transporter-like) family.

Its subcellular location is the membrane. This chain is CTL-like protein DDB_G0269978, found in Dictyostelium discoideum (Social amoeba).